A 222-amino-acid polypeptide reads, in one-letter code: UPF0758 protein CT0611 (222 aa).

The 123-residue stretch at 100 to 222 (KVKGARDVFE…WFSFRDHALL (123 aa)) folds into the MPN domain. Positions 171, 173, and 184 each coordinate Zn(2+). The short motif at 171–184 (HNHPSGDVQPSNAD) is the JAMM motif element.

This sequence belongs to the UPF0758 family.

This Chlorobaculum tepidum (strain ATCC 49652 / DSM 12025 / NBRC 103806 / TLS) (Chlorobium tepidum) protein is UPF0758 protein CT0611.